The chain runs to 221 residues: Veficolin-1 (221 aa).

The N-terminal stretch at 1 to 25 (MTAWLDFPLALSPLVVVSMKGGSFG) is a signal peptide. In terms of domain architecture, Collagen-like spans 50–104 (QGQAGIPGIPGVPGTNGLPGAKGDLGPQGPPGERGSTGIPGKAGPKGDKGDQGEA). The segment at 54-104 (GIPGIPGVPGTNGLPGAKGDLGPQGPPGERGSTGIPGKAGPKGDKGDQGEA) is disordered. Positions 111-221 (QQQEAGAKDC…DFNNSKTFAK (111 aa)) constitute a Fibrinogen C-terminal domain. Residues cysteine 120 and cysteine 148 are joined by a disulfide bond.

It belongs to the ficolin lectin family. Veficolin subfamily. As to expression, expressed by the mandibular venom duct.

It localises to the secreted. Its function is as follows. Initiates complement activation and/or interferes in platelet aggregation and/or blood coagulation. This chain is Veficolin-1, found in Varanus komodoensis (Komodo dragon).